The sequence spans 591 residues: ADP-ribosylating toxin CARDS (591 aa).

The mono-ADP ribosyltransferase (mART) domain stretch occupies residues 1–205 (MPNPVRFVYR…LPTPGIATPV (205 aa)). The NAD(+)-binding pocket stretch occupies residues 206-256 (HLSIPQAASVADVSEGTSASLSFACPDWSPPSSNGENPLDKCIAEKIDNYN). A disulfide bridge connects residues Cys-230 and Cys-247. The KELED motif, involved in host ER trafficking, solvent exposed in the crystal structure motif lies at 268 to 272 (KELED). The interval 273 to 439 (TPVYLRGIKT…QFVTMRAAST (167 aa)) is D2 domain. The segment at 440-591 (FFVDVQLGWY…ILVKDGFDRF (152 aa)) is D3 domain.

This sequence belongs to the bacterial exotoxin subunit A family. Monomer. Binds to host (human) pulmonary surfactant-associated protein A1 (SFTPA1), the major mammalian protein component of pulmonary surfactant. Binds to host (human) surface annexin A2 (ANXA2) on the cell surface; anti-ANXA2 antibodies decrease binding to cells. Interacts with cytosolic host (human) NLRP3, which it ADP-ribosylates in vitro. In terms of processing, 8 hours after treatment of HeLa cells with purified protein, a substantial amount is processed to 2 nearly equal-sized fragments. The disulfide bond between Cys-230 and Cys-247 is required to for the toxin to exert its mART and vacuolating activities within target cells, and for protein processing. Acidic pH in the endosome and retrograde transport are required for toxin cleavage, which is required for both toxin activities. Trypsin treatment under mild conditions leads to cleavage at Lys-305 and Lys-307; the 2 proteins fragments remain associated and can be internalized and vacuolate HeLa cells.

The protein localises to the cell membrane. The protein resides in the cytoplasm. It is found in the cell surface. Its subcellular location is the cell projection. It localises to the attachment organelle. The protein localises to the host cytoplasm. The protein resides in the host cytosol. It is found in the host endoplasmic reticulum. With respect to regulation, in vitro ADP-ribosylation is enhanced by dithiotheritol. In terms of biological role, the main virulence factor for this bacteria, a mono-ADP-ribosylating toxin (mART), that transfers the ADP-ribosyl group from NAD(+) to multiple target proteins in vitro. Also elicits cytopathic effects in mammalian cells, such as disorganization and disruption of respiratory epithelial integrity in tracheal epithelium and vacuolization in the cytoplasm of CHO and HeLa cells as well as in mice and baboons. Treatment of mice or baboons with CARDS elicits a response that is consistent with human M.pneumoniae infections and mouse models of both infection and intoxication, suggesting that CARDS toxin is sufficient to cause prolonged inflammatory responses and airway dysfunction. Treatment of baboons with CARDS induces a number of cytokines; G-CSF (40 fold), IL-1Ra (10 fold), IL-6 and IL-8 (333 and 100 fold, respectively), MIP-1a (5 fold), and RANTES (9 fold). Treatment of mice gives a similar response. Binds phosphatidyl choline, dipalmitoylphosphatidylcholine (DPPC) and sphingomyelin via domains D2 plus D3. Functionally, has at least 2 host receptors SFTPA1 and ANXA2. Internalized by a clathrin-mediated process; protein is rapidly taken up at 37 degrees Celsius. Clathrin-independent or caveolin-dependent endocytosis were not detected. In HeLa cells internalized CARDS trafficks toward the nucleus by retrograde transport from early to late endosomes, then the Golgi apparatus; at 16 hours most toxin is concentrated in the perinuclear region in the host endoplasmic reticulum (ER). Failure to localize to the host ER prevents ADP-ribosylation and vacuolization. An acidic compartment is required to mediate retrotransport and processing of toxin into an N-terminal fragment with mART activity and a C-terminal fragment that is able to induce vacuolization. Its function is as follows. Induces the host NLRP3 inflammasome to release interleukin-1 beta (IL-1 beta); IL-1 beta release requires ADP-ribosylation activity and uptake by host macrophages. In the host colocalizes with the NLRP3 inflammasome; ADP-ribosylates NLRP3 in vitro. ADP-ribosylation of NLRP3 may lead to hyperinflammation. The protein is ADP-ribosylating toxin CARDS of Mycoplasma pneumoniae (strain ATCC 29342 / M129 / Subtype 1) (Mycoplasmoides pneumoniae).